A 626-amino-acid chain; its full sequence is Chaperone protein HtpG (626 aa).

The segment at 1–339 is a; substrate-binding; that stretch reads MSTNQETRGF…SNDLPLNVSR (339 aa). The segment at 340 to 555 is b; the sequence is EILQDNKVTA…NDQMTTQMAK (216 aa). Residues 556–626 form a c region; it reads LFAAAGQPVP…FIKRINKLLG (71 aa).

This sequence belongs to the heat shock protein 90 family. In terms of assembly, homodimer.

It is found in the cytoplasm. Functionally, molecular chaperone. Has ATPase activity. In Aggregatibacter actinomycetemcomitans (Actinobacillus actinomycetemcomitans), this protein is Chaperone protein HtpG.